Consider the following 445-residue polypeptide: Disintegrin and metalloproteinase domain-containing protein 18 (445 aa).

One can recognise a Peptidase M12B domain in the interval 1–106; that stretch reads IYRKHLKYIG…LDMQCLGDLS (106 aa). Topologically, residues 1 to 409 are extracellular; it reads IYRKHLKYIG…TKRLSQHADS (409 aa). Cystine bridges form between Cys18-Cys101, Cys60-Cys85, and Cys62-Cys67. N-linked (GlcNAc...) asparagine glycans are attached at residues Asn19 and Asn59. N-linked (GlcNAc...) asparagine glycosylation is found at Asn84 and Asn131. Positions 113 to 202 constitute a Disintegrin domain; that stretch reads QSVCGNGIVE…HCVPDTFALD (90 aa). Cys173 and Cys194 are joined by a disulfide. Residues Asn333 and Asn340 are each glycosylated (N-linked (GlcNAc...) asparagine). In terms of domain architecture, EGF-like spans 342–376; sequence TGNDCNAAKKCKGNGICNNFGHCQCFPDYRPPDCN. 3 disulfide bridges follow: Cys346–Cys358, Cys352–Cys364, and Cys366–Cys375. A helical transmembrane segment spans residues 410-430; sequence WVILGFFIFLPFIMTLFLGII. Topologically, residues 431–445 are cytoplasmic; it reads KRNERKIVPQKEQER.

Post-translationally, the prodomain and the metalloprotease-like domain are cleaved during the epididymal maturation of the spermatozoa. In terms of tissue distribution, expressed specifically in testis.

Its subcellular location is the membrane. Its function is as follows. Sperm surface membrane protein that may be involved in spermatogenesis and fertilization. This is a non catalytic metalloprotease-like protein. The protein is Disintegrin and metalloproteinase domain-containing protein 18 (Adam18) of Rattus norvegicus (Rat).